Here is a 373-residue protein sequence, read N- to C-terminus: Chaperone protein DnaJ (373 aa).

Positions 4–68 (DFYEILGVSR…QARANYDRFG (65 aa)) constitute a J domain. A CR-type zinc finger spans residues 132–214 (GGEKEIRINH…CGGQGHIQVS (83 aa)). Zn(2+)-binding residues include Cys-145, Cys-148, Cys-162, Cys-165, Cys-188, Cys-191, Cys-202, and Cys-205. CXXCXGXG motif repeat units follow at residues 145-152 (CKTCQGTG), 162-169 (CSTCGGVG), 188-195 (CPTCGGSG), and 202-209 (CESCGGQG).

This sequence belongs to the DnaJ family. As to quaternary structure, homodimer. The cofactor is Zn(2+).

It localises to the cytoplasm. Its function is as follows. Participates actively in the response to hyperosmotic and heat shock by preventing the aggregation of stress-denatured proteins and by disaggregating proteins, also in an autonomous, DnaK-independent fashion. Unfolded proteins bind initially to DnaJ; upon interaction with the DnaJ-bound protein, DnaK hydrolyzes its bound ATP, resulting in the formation of a stable complex. GrpE releases ADP from DnaK; ATP binding to DnaK triggers the release of the substrate protein, thus completing the reaction cycle. Several rounds of ATP-dependent interactions between DnaJ, DnaK and GrpE are required for fully efficient folding. Also involved, together with DnaK and GrpE, in the DNA replication of plasmids through activation of initiation proteins. In Thermosynechococcus vestitus (strain NIES-2133 / IAM M-273 / BP-1), this protein is Chaperone protein DnaJ.